An 849-amino-acid chain; its full sequence is Probable receptor-like protein kinase At1g30570 (849 aa).

An N-terminal signal peptide occupies residues 1–28 (MSKLRKKYLEHLLCVLIFFTYVIGYGEA). At 29–429 (QSKSFLVDCG…GHSVSDSKMR (401 aa)) the chain is on the extracellular side. N-linked (GlcNAc...) asparagine glycosylation is found at N40, N57, N94, N122, N158, N268, N271, N305, and N343. A helical membrane pass occupies residues 430–450 (IIWISVGAGIAIIIFFVFLGI). Topologically, residues 451-849 (LVVCLCKKRR…QTGSALHNSA (399 aa)) are cytoplasmic. A Protein kinase domain is found at 520–793 (FDDGLAIGVG…GEVLWSLEYV (274 aa)). Residues 526-534 (IGVGGFGKV) and K548 each bind ATP. The Proton acceptor role is filled by D644. Residues 810 to 849 (FSSSQAVEEAPESFTLPACSNQDSSETEQSQTGSALHNSA) form a disordered region. Over residues 827 to 849 (ACSNQDSSETEQSQTGSALHNSA) the composition is skewed to polar residues.

This sequence belongs to the protein kinase superfamily. Ser/Thr protein kinase family.

The protein localises to the cell membrane. This Arabidopsis thaliana (Mouse-ear cress) protein is Probable receptor-like protein kinase At1g30570.